A 1363-amino-acid chain; its full sequence is Spike glycoprotein (1363 aa).

Residues 1-13 form the signal peptide; sequence MFLILLISLPMAF. At 14–1307 the chain is on the extracellular side; that stretch reads AVIGDLKCTT…GTYEYYVKWP (1294 aa). A BetaCoV S1-NTD domain is found at 15–298; it reads VIGDLKCTTV…DFMSEIKCKT (284 aa). Cystine bridges form between C21/C165, C160/C193, C172/C252, C286/C296, and C331/C356. N-linked (GlcNAc...) asparagine; by host glycosylation is found at N59 and N133. N198 is a glycosylation site (N-linked (GlcNAc...) asparagine; by host). The 289-residue stretch at 329 to 617 folds into the BetaCoV S1-CTD domain; sequence PDCNIEAWLN…DVNSGTTCST (289 aa). N-linked (GlcNAc...) asparagine; by host glycosylation is present at N359. 2 disulfide bridges follow: C374/C427 and C386/C615. Residues N437, N649, N676, N696, N714, N739, and N788 are each glycosylated (N-linked (GlcNAc...) asparagine; by host). Fusion peptide stretches follow at residues 914–935 and 933–953; these read SAIE…VEAY and EAYN…VQSY. N-linked (GlcNAc...) asparagine; by host glycosylation is present at N937. The cysteines at positions 938 and 949 are disulfide-linked. Residues 1014 to 1064 form a heptad repeat 1 region; it reads QKLIANAFNNALDAIQEGFDATNSALVKIQAVVNANAEALNNLLQQLSNRF. Positions 1043 to 1087 form a coiled coil; sequence QAVVNANAEALNNLLQQLSNRFGAISSSLQEILSRLDALEAQAQI. N1194, N1224, N1234, N1253, N1267, and N1288 each carry an N-linked (GlcNAc...) asparagine; by host glycan. The segment at 1258–1296 is heptad repeat 2; sequence APDLSLDYINVTFLDLQDEMNRLQEAIKVLNQSYINLKD. The stretch at 1269–1297 forms a coiled coil; sequence TFLDLQDEMNRLQEAIKVLNQSYINLKDI. A helical transmembrane segment spans residues 1308 to 1328; that stretch reads WYVWLLIGFAGVAMLVLLFFI. Residues 1329-1363 lie on the Cytoplasmic side of the membrane; that stretch reads CCCTGCGTSCFKICGGCCDDYTGHQELVIKTSHDD. Positions 1359 to 1363 match the KxHxx motif; it reads TSHDD.

Belongs to the betacoronaviruses spike protein family. In terms of assembly, homotrimer; each monomer consists of a S1 and a S2 subunit. The resulting peplomers protrude from the virus surface as spikes. Post-translationally, specific enzymatic cleavages in vivo yield mature proteins. The precursor is processed into S1 and S2 by host cell furin or another cellular protease to yield the mature S1 and S2 proteins. Additionally, a second cleavage leads to the release of a fusion peptide after viral attachment to host cell receptor. In terms of processing, the cytoplasmic Cys-rich domain is palmitoylated. Spike glycoprotein is digested within host endosomes.

The protein resides in the virion membrane. It localises to the host endoplasmic reticulum-Golgi intermediate compartment membrane. It is found in the host cell membrane. Functionally, attaches the virion to the cell membrane by interacting with host receptor, initiating the infection. Its function is as follows. Mediates fusion of the virion and cellular membranes by acting as a class I viral fusion protein. Under the current model, the protein has at least three conformational states: pre-fusion native state, pre-hairpin intermediate state, and post-fusion hairpin state. During viral and target cell membrane fusion, the coiled coil regions (heptad repeats) assume a trimer-of-hairpins structure, positioning the fusion peptide in close proximity to the C-terminal region of the ectodomain. The formation of this structure appears to drive apposition and subsequent fusion of viral and target cell membranes. In terms of biological role, acts as a viral fusion peptide which is unmasked following S2 cleavage occurring upon virus endocytosis. This chain is Spike glycoprotein, found in Bos taurus (Bovine).